Consider the following 277-residue polypeptide: Coiled-coil domain-containing protein 117 (277 aa).

Positions M1–K69 are disordered. Positions F26–G37 are enriched in low complexity. An Omega-N-methylarginine modification is found at R47. Phosphoserine is present on S52. Residues A58–K69 show a composition bias toward basic residues. Positions Q139 to N166 form a coiled coil. Residues L212–L277 form a disordered region.

In terms of assembly, interacts with CIAO2B; the interaction is direct. Interacts with MMS19; the interaction is indirect.

It localises to the cytoplasm. Its subcellular location is the cytoskeleton. The protein localises to the spindle. The protein resides in the nucleus. Facilitates DNA repair, cell cycle progression, and cell proliferation through its interaction with CIAO2B. In Mus musculus (Mouse), this protein is Coiled-coil domain-containing protein 117.